Consider the following 685-residue polypeptide: MTTSFAAAALRDPKLQIPNYHGLRSSSAASSLSRNALSVPSSTRSSSLIRAVSTPAKSETATEKKRSKVEIFKEQSNFIRYPLNEDMLTDAPNLSEAATQLIKFHGSYQQYNRDERGSRTYSFMIRTKNPCGKVSNQLYLTMDDLADQFGIGTLRLTTRQTFQLHGVVKKDLKTVMGSIIRNMGSSLGACGDLNRNVLAPAAPIVSKDYLFAQETSENIAALLTPQSGFYYDVWVDGERFMSAEPPEVIQARNDNSHGTNFTDSPEPIYGTQFLPRKFKIAVTVPTDNSVDILTNDIGVVVVTGDGGEPQGFNLYVGGGMGRTHRMETTFPRLAEPLGYVPKEDILYAVKAIVVTQRENGRRDDRRYSRMKYLIDSWGIDKFRNVVEEYYGKKFEPFRSLPEWEFKSYLGWHQQGDGGLFCGLHVDNGRIAGKMKTALREVIEKYHLNVRLTPNQNLILTDIRAAWKRPITTILSQAGLLLPRYVDPLNITAMACPAFPLCPLAITEAERGIPSILKRIRDMFEKVGLKYNESVVVRITGCPNGCARPYMAELGLVGDGPNSYQIWLGGSSNQTSIARSFMDKVKPQDLEKVLEPLFYHWKQKRQSKESFGDFTVRLGFEKLKEFIEKWEGPAVPPTRHNLKLFTDKDTYEAMDGLAKLQNKNAHQLAMEVVRNYIASNLNGKGE.

Residues 1-51 (MTTSFAAAALRDPKLQIPNYHGLRSSSAASSLSRNALSVPSSTRSSSLIRA) constitute a chloroplast transit peptide. [4Fe-4S] cluster-binding residues include Cys495, Cys501, Cys541, and Cys545. A siroheme-binding site is contributed by Cys545.

It belongs to the nitrite and sulfite reductase 4Fe-4S domain family. In terms of assembly, monomer. Interacts with ferredoxin. Siroheme is required as a cofactor. It depends on [4Fe-4S] cluster as a cofactor. In terms of processing, phosphorylated; this phosphorylation reduces DNA-binding. As to expression, expressed in leaves, stems, and roots.

It localises to the plastid. Its subcellular location is the chloroplast stroma. It is found in the chloroplast nucleoid. The protein localises to the plastid stroma. The enzyme catalyses hydrogen sulfide + 6 oxidized [2Fe-2S]-[ferredoxin] + 3 H2O = sulfite + 6 reduced [2Fe-2S]-[ferredoxin] + 7 H(+). In terms of biological role, essential protein with sulfite reductase activity required in assimilatory sulfate reduction pathway during both primary and secondary metabolism and thus involved in development and growth. Functionally, DNA-binding protein that binds to both double-stranded and single-stranded DNA without significant sequence specificity to reversibly repress the transcriptional activity of chloroplast nucleoids by promoting DNA compaction and possibly regulate DNA replication. The chain is Sulfite reductase [ferredoxin], chloroplastic (SIR) from Pisum sativum (Garden pea).